The following is a 539-amino-acid chain: M protein, serotype 24 (539 aa).

The first 42 residues, 1–42 (MTKNNTNRHYSLRKLKTGTASVAVALTVLGAGLVVNTNEVSA), serve as a signal peptide directing secretion. One copy of the A-1 repeat lies at 118 to 152 (LEARKADLEKALEGAMNFSTADSAKIKTLEAEKAA). The tract at residues 118–301 (LEARKADLEK…ALEAEKADLE (184 aa)) is 5.3 X 35 AA tandem repeats, A-type. An A-2 repeat occupies 153–187 (LAARKADLEKALEGAMNFSTADSAKIKTLEAEKAA). The A-3 repeat unit spans residues 188–222 (LEARQAELEKALEGAMNFSTADSAKIKTLEAEKAA). An A-4 repeat occupies 223 to 257 (LAARKADLEKALEGAMNFSTADSAKIKTLEAEKAA). Residues 258–292 (LEARQAELEKALEGAMNFSTADSAKIKTLEAEKAA) form an A-5 repeat. The stretch at 293 to 297 (LEAEK) is one A-6; truncated repeat. Positions 297–401 (KADLEHQSQV…REAKKQVEKA (105 aa)) are disordered. C repeat units follow at residues 298-332 (ADLE…EAEH), 333-367 (QKLE…EAEH), and 368-402 (QKLE…EKAL). The span at 303–312 (QSQVLNANRQ) shows a compositional bias: polar residues. Composition is skewed to basic and acidic residues over residues 314 to 340 (LRRD…EQNK), 349 to 375 (LRRD…EQNK), and 384 to 401 (LRRD…VEKA). D repeat units lie at residues 435–440 (AKLEAE), 441–446 (AKALKE), 449–454 (AKQAEE), and 456–461 (AKLRAG). The interval 456–511 (AKLRAGKASDSQTPDAKPGNKAVPGKGQAPQAGTKPNQNKAPMKETKRQLPSTGET) is disordered. The LPXTG sorting signal motif lies at 505-509 (LPSTG). Position 508 is a pentaglycyl murein peptidoglycan amidated threonine (T508). The propeptide at 509–539 (GETANPFFTAAALTVMATAGVAAVVKRKEEN) is removed by sortase.

This sequence belongs to the M protein family.

Its subcellular location is the secreted. It localises to the cell wall. Its function is as follows. This protein is one of the different antigenic serotypes of protein M. Protein M is closely associated with virulence of the bacterium and can render the organism resistant to phagocytosis. The chain is M protein, serotype 24 (emm24) from Streptococcus pyogenes.